The sequence spans 188 residues: Elongation factor P (188 aa).

This sequence belongs to the elongation factor P family.

It localises to the cytoplasm. The protein operates within protein biosynthesis; polypeptide chain elongation. Its function is as follows. Involved in peptide bond synthesis. Stimulates efficient translation and peptide-bond synthesis on native or reconstituted 70S ribosomes in vitro. Probably functions indirectly by altering the affinity of the ribosome for aminoacyl-tRNA, thus increasing their reactivity as acceptors for peptidyl transferase. In Anaplasma phagocytophilum (strain HZ), this protein is Elongation factor P.